Here is a 369-residue protein sequence, read N- to C-terminus: Peptide chain release factor 2 (369 aa).

Q251 carries the N5-methylglutamine modification.

The protein belongs to the prokaryotic/mitochondrial release factor family. Post-translationally, methylated by PrmC. Methylation increases the termination efficiency of RF2.

The protein resides in the cytoplasm. Peptide chain release factor 2 directs the termination of translation in response to the peptide chain termination codons UGA and UAA. The chain is Peptide chain release factor 2 from Campylobacter fetus subsp. fetus (strain 82-40).